The sequence spans 457 residues: Bifunctional protein GlmU (457 aa).

Residues 1–230 form a pyrophosphorylase region; that stretch reads MLNVVILAAG…SWETLGVNSR (230 aa). UDP-N-acetyl-alpha-D-glucosamine contacts are provided by residues 7–10, lysine 21, glutamine 73, 78–79, 104–106, glycine 140, glutamate 155, asparagine 170, and asparagine 228; these read LAAG, GT, and YGD. Mg(2+) is bound at residue aspartate 106. Asparagine 228 provides a ligand contact to Mg(2+). A linker region spans residues 231 to 251; the sequence is VQQAQLERAWQSELARRQLEA. The tract at residues 252-457 is N-acetyltransferase; that stretch reads GVTLADPARF…EGWKRPVKKS (206 aa). Positions 334 and 352 each coordinate UDP-N-acetyl-alpha-D-glucosamine. Histidine 364 acts as the Proton acceptor in catalysis. UDP-N-acetyl-alpha-D-glucosamine contacts are provided by tyrosine 367 and asparagine 378. Residues alanine 381, 387-388, serine 406, alanine 424, and arginine 441 contribute to the acetyl-CoA site; that span reads NY.

It in the N-terminal section; belongs to the N-acetylglucosamine-1-phosphate uridyltransferase family. The protein in the C-terminal section; belongs to the transferase hexapeptide repeat family. In terms of assembly, homotrimer. It depends on Mg(2+) as a cofactor.

It localises to the cytoplasm. It catalyses the reaction alpha-D-glucosamine 1-phosphate + acetyl-CoA = N-acetyl-alpha-D-glucosamine 1-phosphate + CoA + H(+). It carries out the reaction N-acetyl-alpha-D-glucosamine 1-phosphate + UTP + H(+) = UDP-N-acetyl-alpha-D-glucosamine + diphosphate. It participates in nucleotide-sugar biosynthesis; UDP-N-acetyl-alpha-D-glucosamine biosynthesis; N-acetyl-alpha-D-glucosamine 1-phosphate from alpha-D-glucosamine 6-phosphate (route II): step 2/2. It functions in the pathway nucleotide-sugar biosynthesis; UDP-N-acetyl-alpha-D-glucosamine biosynthesis; UDP-N-acetyl-alpha-D-glucosamine from N-acetyl-alpha-D-glucosamine 1-phosphate: step 1/1. The protein operates within bacterial outer membrane biogenesis; LPS lipid A biosynthesis. Its function is as follows. Catalyzes the last two sequential reactions in the de novo biosynthetic pathway for UDP-N-acetylglucosamine (UDP-GlcNAc). The C-terminal domain catalyzes the transfer of acetyl group from acetyl coenzyme A to glucosamine-1-phosphate (GlcN-1-P) to produce N-acetylglucosamine-1-phosphate (GlcNAc-1-P), which is converted into UDP-GlcNAc by the transfer of uridine 5-monophosphate (from uridine 5-triphosphate), a reaction catalyzed by the N-terminal domain. The protein is Bifunctional protein GlmU of Bordetella bronchiseptica (strain ATCC BAA-588 / NCTC 13252 / RB50) (Alcaligenes bronchisepticus).